A 919-amino-acid polypeptide reads, in one-letter code: Isoleucine--tRNA ligase (919 aa).

The short motif at 59-69 is the 'HIGH' region element; the sequence is PYANGHLHIGH. An L-isoleucyl-5'-AMP-binding site is contributed by E570. The 'KMSKS' region motif lies at 611 to 615; that stretch reads KMSKS. Residue K614 coordinates ATP. Residues C893, C896, C908, and C911 each contribute to the Zn(2+) site.

The protein belongs to the class-I aminoacyl-tRNA synthetase family. IleS type 1 subfamily. Monomer. Zn(2+) serves as cofactor.

The protein resides in the cytoplasm. The catalysed reaction is tRNA(Ile) + L-isoleucine + ATP = L-isoleucyl-tRNA(Ile) + AMP + diphosphate. Its function is as follows. Catalyzes the attachment of isoleucine to tRNA(Ile). As IleRS can inadvertently accommodate and process structurally similar amino acids such as valine, to avoid such errors it has two additional distinct tRNA(Ile)-dependent editing activities. One activity is designated as 'pretransfer' editing and involves the hydrolysis of activated Val-AMP. The other activity is designated 'posttransfer' editing and involves deacylation of mischarged Val-tRNA(Ile). The polypeptide is Isoleucine--tRNA ligase (Campylobacter curvus (strain 525.92)).